A 174-amino-acid chain; its full sequence is ATP synthase subunit b, organellar chromatophore (174 aa).

The chain crosses the membrane as a helical span at residues 26-46 (LINLIIVIGVLFTFLRGFLGE).

This sequence belongs to the ATPase B chain family. F-type ATPases have 2 components, F(1) - the catalytic core - and F(0) - the membrane proton channel. F(1) has five subunits: alpha(3), beta(3), gamma(1), delta(1), epsilon(1). F(0) has four main subunits: a(1), b(1), b'(1) and c(10-14). The alpha and beta chains form an alternating ring which encloses part of the gamma chain. F(1) is attached to F(0) by a central stalk formed by the gamma and epsilon chains, while a peripheral stalk is formed by the delta, b and b' chains.

Its subcellular location is the plastid. The protein resides in the organellar chromatophore thylakoid membrane. F(1)F(0) ATP synthase produces ATP from ADP in the presence of a proton or sodium gradient. F-type ATPases consist of two structural domains, F(1) containing the extramembraneous catalytic core and F(0) containing the membrane proton channel, linked together by a central stalk and a peripheral stalk. During catalysis, ATP synthesis in the catalytic domain of F(1) is coupled via a rotary mechanism of the central stalk subunits to proton translocation. In terms of biological role, component of the F(0) channel, it forms part of the peripheral stalk, linking F(1) to F(0). The chain is ATP synthase subunit b, organellar chromatophore from Paulinella chromatophora.